The following is a 222-amino-acid chain: uncharacterized protein (222 aa).

Residues 43 to 73 (SQNEEFEYEMERMLSILNEQTMDLTQLQSRI) are a coiled coil.

This is an uncharacterized protein from Rickettsia conorii (strain ATCC VR-613 / Malish 7).